The chain runs to 509 residues: Maturase K (509 aa).

Belongs to the intron maturase 2 family. MatK subfamily.

It is found in the plastid. Its subcellular location is the chloroplast. Functionally, usually encoded in the trnK tRNA gene intron. Probably assists in splicing its own and other chloroplast group II introns. This Sequoia sempervirens (California redwood) protein is Maturase K.